The primary structure comprises 183 residues: Putative 3-methyladenine DNA glycosylase (183 aa).

It belongs to the DNA glycosylase MPG family.

In Legionella pneumophila subsp. pneumophila (strain Philadelphia 1 / ATCC 33152 / DSM 7513), this protein is Putative 3-methyladenine DNA glycosylase.